The sequence spans 257 residues: MLHNIRIVLVETSHTGNMGSTARAMKTMGLTNLYLVNPLVKPDSQAIALSAGASDVIGKATIVDTLDEALAGCSLVVGTSARSRTLPWPMLEPRECGVRSAREAEHAPVALVFGRERVGLTNDELQKCHYHVAIPANPEYSSLNLAMAVQILAYEVRVAYLDRQQANAPVEEEEEAPYPLVDDLERFYQHLEQVLSHSGFIRQAHPGQIMSKLRRLFTRARPEAQELNILRGMLTSIEKQDKYPQRGTGDTAGKSKD.

S-adenosyl-L-methionine contacts are provided by residues 79-81, Gly-114, Ile-134, and 141-143; these read TSA and SSL. The segment at 238–257 is disordered; the sequence is EKQDKYPQRGTGDTAGKSKD.

Belongs to the class IV-like SAM-binding methyltransferase superfamily. RNA methyltransferase TrmH family. Homodimer.

It is found in the cytoplasm. It catalyses the reaction cytidine(32) in tRNA + S-adenosyl-L-methionine = 2'-O-methylcytidine(32) in tRNA + S-adenosyl-L-homocysteine + H(+). The enzyme catalyses uridine(32) in tRNA + S-adenosyl-L-methionine = 2'-O-methyluridine(32) in tRNA + S-adenosyl-L-homocysteine + H(+). Its function is as follows. Catalyzes the formation of 2'O-methylated cytidine (Cm32) or 2'O-methylated uridine (Um32) at position 32 in tRNA. The chain is tRNA (cytidine/uridine-2'-O-)-methyltransferase TrmJ (trmJ) from Yersinia pestis bv. Antiqua (strain Antiqua).